A 97-amino-acid chain; its full sequence is RxLR effector protein PexRD21 (97 aa).

Positions Met1 to Ala21 are cleaved as a signal peptide. The short motif at Arg48–Arg66 is the RxLR-dEER element.

The protein belongs to the RxLR effector family.

The protein resides in the secreted. It is found in the host cell membrane. Its function is as follows. Effector that is involved in host plant infection. Contributes to virulence during the early infection stage, by inhibiting plant defense responses induced by both PAMP-triggered immunity (PTI) and effector-triggered immunity (ETI). This is RxLR effector protein PexRD21 from Phytophthora infestans (strain T30-4) (Potato late blight agent).